We begin with the raw amino-acid sequence, 312 residues long: Malate dehydrogenase (312 aa).

Residues 7–13 (GAAGGIG) and Asp-34 contribute to the NAD(+) site. Substrate contacts are provided by Arg-81 and Arg-87. NAD(+) contacts are provided by residues Asn-94 and 117–119 (ITN). Residues Asn-119 and Arg-153 each coordinate substrate. Catalysis depends on His-177, which acts as the Proton acceptor. An NAD(+)-binding site is contributed by Met-227.

Belongs to the LDH/MDH superfamily. MDH type 1 family. Homodimer.

The enzyme catalyses (S)-malate + NAD(+) = oxaloacetate + NADH + H(+). Its function is as follows. Catalyzes the reversible oxidation of malate to oxaloacetate. This chain is Malate dehydrogenase, found in Photobacterium profundum (strain SS9).